A 358-amino-acid polypeptide reads, in one-letter code: D-alanine--D-alanine ligase B (358 aa).

The 206-residue stretch at 147–352 (KYVLENFKFK…YSALIDELIE (206 aa)) folds into the ATP-grasp domain. 179–234 (VEKLQYDVFIKPANSGSSVGITKAHNKEELLKGLEEAFIHDKNVLVEEAINAREIE) serves as a coordination point for ATP. Residues aspartate 305, glutamate 319, and asparagine 321 each contribute to the Mg(2+) site.

The protein belongs to the D-alanine--D-alanine ligase family. Requires Mg(2+) as cofactor. Mn(2+) is required as a cofactor.

It localises to the cytoplasm. The catalysed reaction is 2 D-alanine + ATP = D-alanyl-D-alanine + ADP + phosphate + H(+). It participates in cell wall biogenesis; peptidoglycan biosynthesis. Cell wall formation. In Clostridium tetani (strain Massachusetts / E88), this protein is D-alanine--D-alanine ligase B.